Consider the following 383-residue polypeptide: MGLHFTLLLAALANCLCPARLCIICDPFVVAAIKTLEQNYLPTHLAPEHHEDVMKRVEQEVRNFADLPLNQNTFLGVVDEDTLEQASWSFLKDLKRITDSDVKGELFVKELFWMLRLQKDIFATLVARFQKEVYCPNQCGTMSQTLIWCNKCEKQMHFCRKSMDCGERQIEVHRLEDMVLDCQLSWHHASEGLTDYSFYRVWGNSSETLMSKGKEPYLTKTMVGPEDAGNYRCELDTVNAGPATIIYYHVTVLPPRSVEEKPPPNIVTQEEEETPVQVIVPTLEPEPEPEPIPTVTHRPEKKLKSRLLILLILGFVVLVASVIASVLHFRKTRVKSKNSNVENKTSAAEFKSEAESPQKMGSRKLSQAEFHTDSSDKVEEADN.

An N-terminal signal peptide occupies residues methionine 1–leucine 21. Intrachain disulfides connect cysteine 22/cysteine 149, cysteine 25/cysteine 152, cysteine 135/cysteine 159, cysteine 139/cysteine 165, and cysteine 182/cysteine 233. At cysteine 22 to arginine 306 the chain is on the extracellular side. The important for interaction with IZUMO1R stretch occupies residues tryptophan 148–arginine 160. Residues glutamate 167 to threonine 251 form the Ig-like C2-type domain. The N-linked (GlcNAc...) asparagine glycan is linked to asparagine 204. The helical transmembrane segment at leucine 307–leucine 327 threads the bilayer. The Cytoplasmic portion of the chain corresponds to histidine 328–asparagine 383. The segment at lysine 335–asparagine 383 is disordered. The span at lysine 337–serine 346 shows a compositional bias: polar residues. Serine 339, serine 346, and serine 366 each carry phosphoserine. Residues phenylalanine 370–asparagine 383 are compositionally biased toward basic and acidic residues. Residue threonine 372 is modified to Phosphothreonine.

The protein belongs to the Izumo family. In terms of assembly, monomer, homodimer; disulfide-linked and homooligomer; depending on the context. Interacts with IZUMO1R/JUNO. IZUMO1 and IZUMO1R/JUNO form a complex with 1:1 stoichiometry. In gamete recognition, IZUMO1R/JUNO first binds to monomeric IZUMO1. The weak, but specific interaction with IZUMO1R/JUNO induces IZUMO1 homodimerization. The process follows a tight binding phase where IZUMO1 bends the entire structure towards the sperm membrane side through a thiol-disulfide exchange reaction. The molecule no longer binds to IZUMO1R/JUNO and instead binds to a putative second oocyte receptor. Interacts with ACE3. Part of a oolemmal binding multimeric complex (IZUMO1 complex) composed at least of IZUMO1 and GLIPR1L1; the complex assemblage is influenced by the maturation status of the male germ cell. Interacts with GLIPR1L1. Interacts with FREY; the interaction retains IZUMO1 at the endoplasmic reticulum membrane and coordinates IZUMO1 complex assembly. Interacts with WDR54. Forms a complex with SPACA6 and TMEM81 on spermatocyte cell membrane. Post-translationally, N-glycosylated. Glycosylation is not essential for fusion and for proper protein trafficking in sperm. Phosphorylated. The cytoplasmic C-terminus is phosphorylated and undergoes phosphorylation changes during epididymal transit. Expressed in sperm (at protein level).

It localises to the cell membrane. The protein localises to the cytoplasmic vesicle. Its subcellular location is the secretory vesicle. It is found in the acrosome membrane. Functionally, essential sperm cell-surface protein required for fertilization by acting as a ligand for IZUMO1R/JUNO receptor on egg. The IZUMO1:IZUMO1R/JUNO interaction is a necessary adhesion event between sperm and egg that is required for fertilization but is not sufficient for cell fusion. The ligand-receptor interaction probably does not act as a membrane 'fusogen'. Plays a critical role in sperm-oolemma binding prior to plasma membrane fusion. Can mediate cell-cell fusion in cultured mammalian cells independently of its binding to IZUMO1R/JUNO. The chain is Izumo sperm-egg fusion protein 1 from Rattus norvegicus (Rat).